Reading from the N-terminus, the 879-residue chain is MEKMGLNQVREAYLKFFESKGHLRLPSFSVVPKNDKSLLLINAGMAPLKPYFTGLQTPPRKRVTTCQKCIRTGDIENVGKTSRHATFFEMMGNFSFGDYFKNEVIPWAWEFTTEVLKLPKEKLYVTIYLDDDEAYDIWTSKTDVDPKHIFRLGKEDNFWEHGVGPCGPCSEIHFYKDNGEIKSAEEFIEKSDADRAVEFWNLVFTQFDKDEDGNYNRLEFPNIDTGMGLERMATIMQGVETIFEVDTIKSILDKVAALANTKYGEDELKDVSLRIITDHVRSVSVMISDEVLPSNEGRGYVLRRLLRRAARHGKLLGIKGTFLYKIVDSVIENSGEAYPELKEKKDYIKKVISIEEERFAETIDSGMEILKEYIEDLEKNNKKVLSGEKVFKLYDTYGFPLELTEEILEEKGITVDMDSFNKEMKEQRERARAARSESTYMGTDVKILDTIPSEIETTFDGYENLELQSKVKVIIKDDAFADCINKGEKGIIVTDRTPFYAEMGGQIGDKGTISADGFMAKVQDCKNNIGGKIVHFVEVTEGSIKLEDEVLLEVDRKRRENIGKNHSATHLLHAALRKVVGEHVHQSGSYVDEDKLRFDFTHFESLTHEELKKVEDLVNDTIESVWDVVTKEMTIEEAKNSGAMALFDEKYGDKVRVVKMGDFSTELCGGTHISNVGKIGLFKIVSESGIAAGTRRIEAVTGHKALEFIEHKSDLLRQIASMLKCSEKDIINRLNQQNAELKDKDKEISALKSKLASGSEDDILKNIKEVKGVKLAVAALKDVDGEALRNLGDKIKNKIESGVVVLGSEVEGKVQFIAMASKDVVSKGVHCGTIVREIAKIAGGGGGGRPDMAQAGGRLPEKLNDAINEVENIMENLVK.

4 residues coordinate Zn(2+): histidine 566, histidine 570, cysteine 668, and histidine 672.

It belongs to the class-II aminoacyl-tRNA synthetase family. The cofactor is Zn(2+).

Its subcellular location is the cytoplasm. The catalysed reaction is tRNA(Ala) + L-alanine + ATP = L-alanyl-tRNA(Ala) + AMP + diphosphate. Functionally, catalyzes the attachment of alanine to tRNA(Ala) in a two-step reaction: alanine is first activated by ATP to form Ala-AMP and then transferred to the acceptor end of tRNA(Ala). Also edits incorrectly charged Ser-tRNA(Ala) and Gly-tRNA(Ala) via its editing domain. The chain is Alanine--tRNA ligase from Clostridium novyi (strain NT).